The chain runs to 465 residues: SET domain-containing protein 3 (465 aa).

In terms of domain architecture, SET spans 18 to 265; sequence DKVTVKWDKK…AREELLDSYG (248 aa).

Belongs to the class V-like SAM-binding methyltransferase superfamily.

In Caenorhabditis elegans, this protein is SET domain-containing protein 3 (set-3).